The sequence spans 131 residues: Small ribosomal subunit protein uS8 (131 aa).

The protein belongs to the universal ribosomal protein uS8 family. As to quaternary structure, part of the 30S ribosomal subunit. Contacts proteins S5 and S12.

One of the primary rRNA binding proteins, it binds directly to 16S rRNA central domain where it helps coordinate assembly of the platform of the 30S subunit. This Ralstonia nicotianae (strain ATCC BAA-1114 / GMI1000) (Ralstonia solanacearum) protein is Small ribosomal subunit protein uS8.